The chain runs to 350 residues: Homeobox-leucine zipper protein HOX5 (350 aa).

The segment at residues 83 to 142 (APEKKRRLTAEQVQMLERSFEEENKLEPERKTELARRLGMAPRQVAVWFQNRRARWKTKQ) is a DNA-binding region (homeobox). Residues 141 to 185 (KQLEHDFDRLKAAYDALAADHHALLSDNDRLRAQVISLTEKLQDK) are leucine-zipper. A disordered region spans residues 180-254 (EKLQDKETSP…TNDDGDGGGA (75 aa)). The segment covering 188 to 198 (SPSSATITTAA) has biased composition (low complexity).

It belongs to the HD-ZIP homeobox family. Class I subfamily. Homodimer. May form a heterodimer with HOX4. In terms of tissue distribution, expressed in seedlings, roots, leaves, nodes, internodes, flowers and embryo.

The protein resides in the nucleus. In terms of biological role, probable transcription activator that binds to the DNA sequence 5'-CAAT[AT]ATTG-3'. The chain is Homeobox-leucine zipper protein HOX5 (HOX5) from Oryza sativa subsp. indica (Rice).